A 337-amino-acid chain; its full sequence is Ketol-acid reductoisomerase (NADP(+)) (337 aa).

The 181-residue stretch at Val3–Thr183 folds into the KARI N-terminal Rossmann domain. NADP(+) contacts are provided by residues Tyr26–Gln29, Lys49, Ser52, Ser54, and Asp84–Gln87. His109 is a catalytic residue. NADP(+) is bound at residue Gly135. The region spanning Thr184 to Val329 is the KARI C-terminal knotted domain. Positions 192, 196, 228, and 232 each coordinate Mg(2+). Residue Ser253 participates in substrate binding.

This sequence belongs to the ketol-acid reductoisomerase family. Requires Mg(2+) as cofactor.

The enzyme catalyses (2R)-2,3-dihydroxy-3-methylbutanoate + NADP(+) = (2S)-2-acetolactate + NADPH + H(+). It carries out the reaction (2R,3R)-2,3-dihydroxy-3-methylpentanoate + NADP(+) = (S)-2-ethyl-2-hydroxy-3-oxobutanoate + NADPH + H(+). The protein operates within amino-acid biosynthesis; L-isoleucine biosynthesis; L-isoleucine from 2-oxobutanoate: step 2/4. It participates in amino-acid biosynthesis; L-valine biosynthesis; L-valine from pyruvate: step 2/4. Functionally, involved in the biosynthesis of branched-chain amino acids (BCAA). Catalyzes an alkyl-migration followed by a ketol-acid reduction of (S)-2-acetolactate (S2AL) to yield (R)-2,3-dihydroxy-isovalerate. In the isomerase reaction, S2AL is rearranged via a Mg-dependent methyl migration to produce 3-hydroxy-3-methyl-2-ketobutyrate (HMKB). In the reductase reaction, this 2-ketoacid undergoes a metal-dependent reduction by NADPH to yield (R)-2,3-dihydroxy-isovalerate. This Rhodococcus erythropolis (strain PR4 / NBRC 100887) protein is Ketol-acid reductoisomerase (NADP(+)).